The primary structure comprises 636 residues: Probable potassium transport system protein Kup (636 aa).

The next 12 membrane-spanning stretches (helical) occupy residues 23–43 (LVIGAIGVVFGDIGTSPLYSL), 63–83 (IISLLFWAMTIVVSIKYVVFV), 114–134 (VLMMLGIFGACMFYGDAVITP), 150–170 (PQLSRFVIPITLVILVALFLI), 182–202 (FGPVMVVWFVTLGLLGLYNLV), 217–237 (ISFLIAHSLQAFIVLGSVFLV), 260–280 (WFVLVMPCLILNYFGQGAMLL), 298–318 (LLIPMVVLATCATVIASQAVI), 350–370 (IYLPVINWILLVLVVAVVISF), 379–399 (AYGIAVTTTMVITTFLAAVVM), 407–427 (PALVTLLGLSFLLVDLAFFAA), and 432–452 (VAEGGWFPLLLGSTAFFLLMT).

The protein belongs to the HAK/KUP transporter (TC 2.A.72) family.

Its subcellular location is the cell inner membrane. The enzyme catalyses K(+)(in) + H(+)(in) = K(+)(out) + H(+)(out). In terms of biological role, transport of potassium into the cell. Likely operates as a K(+):H(+) symporter. This is Probable potassium transport system protein Kup from Cupriavidus pinatubonensis (strain JMP 134 / LMG 1197) (Cupriavidus necator (strain JMP 134)).